The sequence spans 407 residues: Queuine tRNA-ribosyltransferase-like protein (407 aa).

Belongs to the queuine tRNA-ribosyltransferase family.

In Plasmodium falciparum (isolate 3D7), this protein is Queuine tRNA-ribosyltransferase-like protein.